We begin with the raw amino-acid sequence, 468 residues long: Peroxisome proliferator-activated receptor alpha (468 aa).

Positions 1–20 are disordered; the sequence is MVDTESQICPLSPFGDDDLE. The nuclear receptor DNA-binding region spans 99–173; the sequence is NIECRICGDK…DGMSHNAIRF (75 aa). 2 consecutive NR C4-type zinc fingers follow at residues 102 to 122 and 139 to 161; these read CRIC…CEGC and CDRS…FQKC. Residues 239–466 enclose the NR LBD domain; that stretch reads FVIHDMETLC…HPLLQEIYRD (228 aa). Residues 304–433 form a required for heterodimerization with RXRA region; sequence DQVTLLKYGV…PKLLQKMADL (130 aa).

Belongs to the nuclear hormone receptor family. NR1 subfamily. Heterodimer; with RXRA. This heterodimerization is required for DNA binding and transactivation activity. Interacts with NCOA3 coactivator. Interacts with CITED2; the interaction stimulates its transcriptional activity. Also interacts with PPARBP in vitro. Interacts with AKAP13, LPIN1, PRDM16 and coactivator NCOA6. Interacts with ASXL1 and ASXL2. Interacts with PER2. Interacts with SIRT1; the interaction seems to be modulated by NAD(+) levels. Interacts with CRY1 and CRY2. In hepatocytes, interacts with PAQR3 and HUWE1; the interactions promote PPARA poylubiquitination and HUWE1-mediated degradation. In terms of processing, ubiquitinated by E3 ubiquitin-protein ligase HUWE1; leading to proteasomal degradation. Phosphorylated.

It localises to the nucleus. Ligand-activated transcription factor. Key regulator of lipid metabolism. Activated by the endogenous ligand 1-palmitoyl-2-oleoyl-sn-glycerol-3-phosphocholine (16:0/18:1-GPC). Activated by oleylethanolamide, a naturally occurring lipid that regulates satiety. Receptor for peroxisome proliferators such as hypolipidemic drugs and fatty acids. Regulates the peroxisomal beta-oxidation pathway of fatty acids. Functions as a transcription activator for the ACOX1 and P450 genes. Transactivation activity requires heterodimerization with RXRA and is antagonized by NR2C2. May be required for the propagation of clock information to metabolic pathways regulated by PER2. This is Peroxisome proliferator-activated receptor alpha (PPARA) from Phascolarctos cinereus (Koala).